We begin with the raw amino-acid sequence, 184 residues long: NADH-quinone oxidoreductase subunit B (184 aa).

[4Fe-4S] cluster is bound by residues Cys63, Cys64, Cys128, and Cys158.

Belongs to the complex I 20 kDa subunit family. In terms of assembly, NDH-1 is composed of 14 different subunits. Subunits NuoB, C, D, E, F, and G constitute the peripheral sector of the complex. Requires [4Fe-4S] cluster as cofactor.

Its subcellular location is the cell inner membrane. The enzyme catalyses a quinone + NADH + 5 H(+)(in) = a quinol + NAD(+) + 4 H(+)(out). Its function is as follows. NDH-1 shuttles electrons from NADH, via FMN and iron-sulfur (Fe-S) centers, to quinones in the respiratory chain. Couples the redox reaction to proton translocation (for every two electrons transferred, four hydrogen ions are translocated across the cytoplasmic membrane), and thus conserves the redox energy in a proton gradient. This chain is NADH-quinone oxidoreductase subunit B, found in Stenotrophomonas maltophilia (strain R551-3).